We begin with the raw amino-acid sequence, 336 residues long: DNA repair protein Rad51 homolog (336 aa).

Residues 1–10 (MEKLTNVQAQ) are compositionally biased toward polar residues. A disordered region spans residues 1–20 (MEKLTNVQAQQEEEEEEGPL). 124-131 (GEFRCGKT) contacts ATP.

Belongs to the RecA family. RAD51 subfamily. As to quaternary structure, interacts with Rrp6; the interaction is required for the recruitment of spn-A to the DNA-damage response foci. In terms of tissue distribution, highly expressed in ovaries.

The protein localises to the nucleus. It localises to the cytoplasm. Functionally, plays an important role in homologous strand exchange, a key step in DNA repair through homologous recombination (HR). Binds to single and double-stranded DNA and exhibits DNA-dependent ATPase activity. Underwinds duplex DNA. Spindle genes are required for each of the symmetry-breaking steps that generate polarity during egg axis formation; oocyte positioning at the posterior of the cyst to generate the first AP polarity and inhibition of gurken (grk) signaling to the follicle cell layer to polarize first the AP axis and then DV axis. May have a role in female meiosis. The chain is DNA repair protein Rad51 homolog (spn-A) from Drosophila melanogaster (Fruit fly).